A 157-amino-acid chain; its full sequence is Biotin carboxyl carrier protein of acetyl-CoA carboxylase (157 aa).

In terms of domain architecture, Biotinyl-binding spans 80 to 156 (YATIVSPMVG…DCGQALMKVE (77 aa)). Lys-122 carries the N6-biotinyllysine modification.

The protein resides in the plastid. It is found in the chloroplast. It participates in lipid metabolism; fatty acid biosynthesis. Functionally, this protein is a component of the acetyl coenzyme A carboxylase complex; first, biotin carboxylase catalyzes the carboxylation of the carrier protein and then the transcarboxylase transfers the carboxyl group to form malonyl-CoA. The protein is Biotin carboxyl carrier protein of acetyl-CoA carboxylase (accB) of Porphyra purpurea (Red seaweed).